The primary structure comprises 300 residues: Estradiol 17-beta-dehydrogenase 11 (300 aa).

An N-terminal signal peptide occupies residues 1 to 19 (MKFLLDVLLLLPLLIVCSL). 40 to 64 (LITGAGHGIGRLTAYEFAKLKSKLV) contacts NADP(+). Ser172 contacts substrate. Tyr185 acts as the Proton acceptor in catalysis.

The protein belongs to the short-chain dehydrogenases/reductases (SDR) family. 17-beta-HSD 3 subfamily.

It is found in the endoplasmic reticulum. The protein localises to the lipid droplet. It carries out the reaction 17beta-estradiol + NAD(+) = estrone + NADH + H(+). The catalysed reaction is 17beta-estradiol + NADP(+) = estrone + NADPH + H(+). Can convert androstan-3-alpha,17-beta-diol (3-alpha-diol) to androsterone in vitro, suggesting that it may participate in androgen metabolism during steroidogenesis. May act by metabolizing compounds that stimulate steroid synthesis and/or by generating metabolites that inhibit it. Has no activity toward DHEA (dehydroepiandrosterone), or A-dione (4-androste-3,17-dione), and only a slight activity toward testosterone to A-dione. The sequence is that of Estradiol 17-beta-dehydrogenase 11 (HSD17B11) from Pongo abelii (Sumatran orangutan).